Consider the following 185-residue polypeptide: Fimbrial subunit type 1 (185 aa).

The signal sequence occupies residues 1-22 (MRHKLMTSTIASLMFVAAAAVA). Residues C46 and C86 are joined by a disulfide bond.

This sequence belongs to the fimbrial protein family.

Its subcellular location is the fimbrium. In Salmonella typhimurium, this protein is Fimbrial subunit type 1.